The sequence spans 84 residues: MVVIRLARGGSKKRPFFNIVATDSRNRRDGRFIERVGFYNPLATEGEEGLRLAQDRLAYWQGVGAQLSPTVARLVKQGAAKAAA.

Belongs to the bacterial ribosomal protein bS16 family.

The chain is Small ribosomal subunit protein bS16 from Cupriavidus necator (strain ATCC 17699 / DSM 428 / KCTC 22496 / NCIMB 10442 / H16 / Stanier 337) (Ralstonia eutropha).